The following is a 937-amino-acid chain: Isoleucine--tRNA ligase (937 aa).

Residues 58–68 (PYANGDIHIGH) carry the 'HIGH' region motif. An L-isoleucyl-5'-AMP-binding site is contributed by Glu561. Residues 602-606 (KMSKS) carry the 'KMSKS' region motif. Residue Lys605 participates in ATP binding. Zn(2+) is bound by residues Cys900, Cys903, Cys920, and Cys923.

The protein belongs to the class-I aminoacyl-tRNA synthetase family. IleS type 1 subfamily. Monomer. Requires Zn(2+) as cofactor.

Its subcellular location is the cytoplasm. It carries out the reaction tRNA(Ile) + L-isoleucine + ATP = L-isoleucyl-tRNA(Ile) + AMP + diphosphate. Catalyzes the attachment of isoleucine to tRNA(Ile). As IleRS can inadvertently accommodate and process structurally similar amino acids such as valine, to avoid such errors it has two additional distinct tRNA(Ile)-dependent editing activities. One activity is designated as 'pretransfer' editing and involves the hydrolysis of activated Val-AMP. The other activity is designated 'posttransfer' editing and involves deacylation of mischarged Val-tRNA(Ile). The polypeptide is Isoleucine--tRNA ligase (Alcanivorax borkumensis (strain ATCC 700651 / DSM 11573 / NCIMB 13689 / SK2)).